The following is a 215-amino-acid chain: Adenylate kinase (215 aa).

10-15 (GAGKGT) lines the ATP pocket. The interval 30 to 59 (STGDMFRAAIKDQTPLGQEAKSYMDKGELV) is NMP. AMP-binding positions include threonine 31, arginine 36, 57 to 59 (ELV), 85 to 88 (GFPR), and glutamine 92. Residues 126–163 (GRRICPTCGATYHVIYNPPKVEGVCDIDGSALVQREDD) form an LID region. Arginine 127 is an ATP binding site. Residues cysteine 130 and cysteine 133 each coordinate Zn(2+). Position 136-137 (136-137 (TY)) interacts with ATP. Zn(2+) contacts are provided by cysteine 150 and aspartate 153. Residues arginine 160 and arginine 171 each contribute to the AMP site. Arginine 199 serves as a coordination point for ATP.

The protein belongs to the adenylate kinase family. In terms of assembly, monomer.

It localises to the cytoplasm. It catalyses the reaction AMP + ATP = 2 ADP. It participates in purine metabolism; AMP biosynthesis via salvage pathway; AMP from ADP: step 1/1. In terms of biological role, catalyzes the reversible transfer of the terminal phosphate group between ATP and AMP. Plays an important role in cellular energy homeostasis and in adenine nucleotide metabolism. This Exiguobacterium sibiricum (strain DSM 17290 / CCUG 55495 / CIP 109462 / JCM 13490 / 255-15) protein is Adenylate kinase.